Consider the following 197-residue polypeptide: Chalcone--flavanone isomerase 2 (197 aa).

Substrate-binding residues include threonine 23, asparagine 88, and threonine 165.

It belongs to the chalcone isomerase family.

The catalysed reaction is a chalcone = a flavanone.. Its pathway is secondary metabolite biosynthesis; flavonoid biosynthesis. In terms of biological role, catalyzes the intramolecular cyclization of bicyclic chalcones into tricyclic (S)-flavanones. Responsible for the isomerization of 4,2',4',6'-tetrahydroxychalcone (also termed chalcone) into naringenin. The protein is Chalcone--flavanone isomerase 2 (CHI2) of Medicago sativa (Alfalfa).